Here is a 263-residue protein sequence, read N- to C-terminus: Methylesterase 2 (263 aa).

The Acyl-ester intermediate role is filled by Ser85. Catalysis depends on charge relay system residues Asp213 and His241.

This sequence belongs to the AB hydrolase superfamily. Methylesterase family.

It catalyses the reaction methyl (indol-3-yl)acetate + H2O = (indol-3-yl)acetate + methanol + H(+). It carries out the reaction methyl (-)-jasmonate + H2O = jasmonate + methanol + H(+). The enzyme catalyses methyl salicylate + H2O = salicylate + methanol + H(+). It functions in the pathway plant hormone biosynthesis. Its pathway is lipid metabolism; oxylipin biosynthesis. With respect to regulation, esterase activity is down-regulated by salicylic acid (SA). Down-regulated by agrochemicals Paraoxon, 3,4-DCl and Profenofos. Its function is as follows. Methylesterase shown to have carboxylesterase activity, methyl indole-3-acetic acid (MeIAA) esterase activity, methyl salicylate (MeSA) esterase activity and methyl jasmonate (MeJA) esterase activity in vitro. This chain is Methylesterase 2, found in Arabidopsis thaliana (Mouse-ear cress).